A 570-amino-acid chain; its full sequence is Aspartyl aminopeptidase (570 aa).

H86 lines the Zn(2+) pocket. H160 is a substrate binding site. D324 lines the Zn(2+) pocket. E379 provides a ligand contact to substrate. Zn(2+) is bound by residues E380 and D434. Residues D434, H437, K462, and Y469 each contribute to the substrate site. H534 contributes to the Zn(2+) binding site.

Belongs to the peptidase M18 family. Homododecamer composed of homodimers and homotrimers that assemble into a tetrahedron shape to create a central tunnel containing the active sites. Homooctamer. Zn(2+) is required as a cofactor.

The protein resides in the cytoplasm. The catalysed reaction is Release of an N-terminal aspartate or glutamate from a peptide, with a preference for aspartate.. Activated by Co(2+). Inhibited by high concentrations (&gt;1mM) of Zn(2+). In terms of biological role, aminopeptidase which specifically catalyzes the removal of glutamic acid or aspartic acid residues from the N-terminus of peptides. May play a role in the final step of host hemoglobin catabolism, by cleaving hemoglobin-derived oligopeptides in the cytoplasm. This Plasmodium falciparum (isolate 3D7) protein is Aspartyl aminopeptidase.